The chain runs to 426 residues: CinA-like protein (426 aa).

It belongs to the CinA family.

This is CinA-like protein from Gloeobacter violaceus (strain ATCC 29082 / PCC 7421).